Consider the following 357-residue polypeptide: Ribosomal RNA large subunit methyltransferase M (357 aa).

S-adenosyl-L-methionine-binding positions include serine 183, 216-219 (APGG), aspartate 235, aspartate 255, and aspartate 271. The Proton acceptor role is filled by lysine 300.

This sequence belongs to the class I-like SAM-binding methyltransferase superfamily. RNA methyltransferase RlmE family. RlmM subfamily. Monomer.

It is found in the cytoplasm. It carries out the reaction cytidine(2498) in 23S rRNA + S-adenosyl-L-methionine = 2'-O-methylcytidine(2498) in 23S rRNA + S-adenosyl-L-homocysteine + H(+). Its function is as follows. Catalyzes the 2'-O-methylation at nucleotide C2498 in 23S rRNA. The sequence is that of Ribosomal RNA large subunit methyltransferase M from Pseudomonas savastanoi pv. phaseolicola (strain 1448A / Race 6) (Pseudomonas syringae pv. phaseolicola (strain 1448A / Race 6)).